We begin with the raw amino-acid sequence, 291 residues long: MVKKSLRQFTLMATATVTLLLGSVPLYAQTADVQQKLAELERQSGGRLGVALINTADNSQILYRADERFAMCSTSKVMAVAAVLKKSESEPNLLNQRVEIKKSDLVNYNPIAEKHVDGTMSLAELSAAALQYSDNVAMNKLISHVGGPASVTAFARQLGDETFRLDRTEPTLNTAIPGDPRDTTSPRAMAQTLRNLTLGKALGDSQRAQLVTWMKGNTTGAASIQAGLPASWVVGDKTGSGDYGTTNDIAVIWPKDRAPLILVTYFTQPQPKAESRRDVLASAAKIVTNGL.

Residues 1-28 (MVKKSLRQFTLMATATVTLLLGSVPLYA) form the signal peptide. Ser73 (nucleophile; acyl-ester intermediate) is an active-site residue. Lys76, Ser133, Glu169, and Ser240 together coordinate a beta-lactam. The active-site Proton acceptor is the Glu169.

This sequence belongs to the class-A beta-lactamase family. In terms of assembly, monomer.

The protein localises to the secreted. It carries out the reaction a beta-lactam + H2O = a substituted beta-amino acid. Its activity is regulated as follows. Inhibited by the beta-lactamase-blocking agent clavulanic acid; in the TG1 strain. Functionally, extended-spectrum beta-lactamase (ESBL) which confers resistance to penicillins, as well as first, second and third-generation cephalosporins. Has cefotaxime-hydrolyzing activity. Inactive against the cephamycin antibiotic, cefoxitin, or against the carbapenem, imipenem. This Escherichia coli protein is Beta-lactamase CTX-M-1.